We begin with the raw amino-acid sequence, 238 residues long: Ribonuclease 3 (238 aa).

The RNase III domain occupies 8 to 135; sequence VAELERRIGY…LIAALYIDGG (128 aa). Glu48 contacts Mg(2+). Asp52 is an active-site residue. Asp121 and Glu124 together coordinate Mg(2+). Residue Glu124 is part of the active site. In terms of domain architecture, DRBM spans 161 to 230; it reads DPKTQLQEWV…AQCMLLKREG (70 aa).

This sequence belongs to the ribonuclease III family. As to quaternary structure, homodimer. Mg(2+) serves as cofactor.

Its subcellular location is the cytoplasm. It carries out the reaction Endonucleolytic cleavage to 5'-phosphomonoester.. In terms of biological role, digests double-stranded RNA. Involved in the processing of primary rRNA transcript to yield the immediate precursors to the large and small rRNAs (23S and 16S). Processes some mRNAs, and tRNAs when they are encoded in the rRNA operon. Processes pre-crRNA and tracrRNA of type II CRISPR loci if present in the organism. The polypeptide is Ribonuclease 3 (Phenylobacterium zucineum (strain HLK1)).